The following is a 151-amino-acid chain: UPF0756 membrane protein Dred_1097 (151 aa).

The next 4 membrane-spanning stretches (helical) occupy residues 6–26, 52–72, 75–95, and 111–131; these read IILL…LATA, VGLI…NIVY, LVMK…TLAT, and LIFG…GIPI.

This sequence belongs to the UPF0756 family.

It is found in the cell membrane. The protein is UPF0756 membrane protein Dred_1097 of Desulforamulus reducens (strain ATCC BAA-1160 / DSM 100696 / MI-1) (Desulfotomaculum reducens).